Reading from the N-terminus, the 247-residue chain is Acyl-coenzyme A thioesterase THEM5 (247 aa).

The Proton donor/acceptor role is filled by aspartate 167.

It belongs to the THEM4/THEM5 thioesterase family. In terms of assembly, homodimer.

It is found in the mitochondrion matrix. The catalysed reaction is hexadecanoyl-CoA + H2O = hexadecanoate + CoA + H(+). It carries out the reaction (9Z,12Z)-octadecadienoyl-CoA + H2O = (9Z,12Z)-octadecadienoate + CoA + H(+). The enzyme catalyses tetradecanoyl-CoA + H2O = tetradecanoate + CoA + H(+). It catalyses the reaction (9Z)-octadecenoyl-CoA + H2O = (9Z)-octadecenoate + CoA + H(+). The catalysed reaction is (9Z)-hexadecenoyl-CoA + H2O = (9Z)-hexadecenoate + CoA + H(+). It carries out the reaction (5Z,8Z,11Z,14Z)-eicosatetraenoyl-CoA + H2O = (5Z,8Z,11Z,14Z)-eicosatetraenoate + CoA + H(+). The enzyme catalyses octadecanoyl-CoA + H2O = octadecanoate + CoA + H(+). Its function is as follows. Has acyl-CoA thioesterase activity towards long-chain (C16 and C18) fatty acyl-CoA substrates, with a preference for linoleoyl-CoA and other unsaturated long-chain fatty acid-CoA esters. Plays an important role in mitochondrial fatty acid metabolism, and in remodeling of the mitochondrial lipid cardiolipin. Required for normal mitochondrial function. The protein is Acyl-coenzyme A thioesterase THEM5 (THEM5) of Homo sapiens (Human).